The following is a 312-amino-acid chain: DNA primase small subunit PriS (312 aa).

Active-site residues include Asp88, Asp90, and Asp215.

This sequence belongs to the eukaryotic-type primase small subunit family. As to quaternary structure, heterodimer of a small subunit (PriS) and a large subunit (PriL). Requires Mg(2+) as cofactor. Mn(2+) is required as a cofactor.

In terms of biological role, catalytic subunit of DNA primase, an RNA polymerase that catalyzes the synthesis of short RNA molecules used as primers for DNA polymerase during DNA replication. The small subunit contains the primase catalytic core and has DNA synthesis activity on its own. Binding to the large subunit stabilizes and modulates the activity, increasing the rate of DNA synthesis while decreasing the length of the DNA fragments, and conferring RNA synthesis capability. The DNA polymerase activity may enable DNA primase to also catalyze primer extension after primer synthesis. May also play a role in DNA repair. This is DNA primase small subunit PriS from Pyrobaculum arsenaticum (strain DSM 13514 / JCM 11321 / PZ6).